We begin with the raw amino-acid sequence, 412 residues long: DNA polymerase IV (412 aa).

The region spanning 12-193 is the UmuC domain; the sequence is ILHVDMNCFF…LPVGAMHGIG (182 aa). Aspartate 16 and aspartate 112 together coordinate Mg(2+). Residue glutamate 113 is part of the active site. A disordered region spans residues 235-257; it reads KGMDDREVDPSQMGQHKSVGNSM. Residues 246-257 show a composition bias toward polar residues; that stretch reads QMGQHKSVGNSM.

The protein belongs to the DNA polymerase type-Y family. In terms of assembly, monomer. Requires Mg(2+) as cofactor.

The protein resides in the cytoplasm. The catalysed reaction is DNA(n) + a 2'-deoxyribonucleoside 5'-triphosphate = DNA(n+1) + diphosphate. Poorly processive, error-prone DNA polymerase involved in untargeted mutagenesis. Copies undamaged DNA at stalled replication forks, which arise in vivo from mismatched or misaligned primer ends. These misaligned primers can be extended by PolIV. Exhibits no 3'-5' exonuclease (proofreading) activity. May be involved in translesional synthesis, in conjunction with the beta clamp from PolIII. This chain is DNA polymerase IV, found in Bacillus anthracis.